We begin with the raw amino-acid sequence, 518 residues long: NADH-quinone oxidoreductase subunit N (518 aa).

Transmembrane regions (helical) follow at residues 18-38, 45-65, 82-102, 113-133, 136-156, 171-191, 220-240, 254-274, 295-315, 328-348, 355-375, 399-419, 439-459, and 486-506; these read FRPE…DLVF, VALL…LLAI, AFAI…VIIA, IGQF…MASA, LLMV…LAGF, VIYG…LYGL, VALV…VAAV, PTPF…ALAI, LAGI…MTLG, LLAY…SAVS, VMIY…VVIL, AVAF…AGFV, WYAW…YYYV, and VMLG…TPMV.

The protein belongs to the complex I subunit 2 family. As to quaternary structure, NDH-1 is composed of 14 different subunits. Subunits NuoA, H, J, K, L, M, N constitute the membrane sector of the complex.

The protein resides in the cell inner membrane. The catalysed reaction is a quinone + NADH + 5 H(+)(in) = a quinol + NAD(+) + 4 H(+)(out). Its function is as follows. NDH-1 shuttles electrons from NADH, via FMN and iron-sulfur (Fe-S) centers, to quinones in the respiratory chain. The immediate electron acceptor for the enzyme in this species is believed to be ubiquinone. Couples the redox reaction to proton translocation (for every two electrons transferred, four hydrogen ions are translocated across the cytoplasmic membrane), and thus conserves the redox energy in a proton gradient. The polypeptide is NADH-quinone oxidoreductase subunit N (Anaeromyxobacter sp. (strain Fw109-5)).